The sequence spans 352 residues: Chorismate synthase (352 aa).

Arg48 serves as a coordination point for NADP(+). Residues 125 to 127 (RSS), 238 to 239 (NA), Gly278, 293 to 297 (KPTSS), and Arg319 each bind FMN.

The protein belongs to the chorismate synthase family. As to quaternary structure, homotetramer. The cofactor is FMNH2.

It carries out the reaction 5-O-(1-carboxyvinyl)-3-phosphoshikimate = chorismate + phosphate. Its pathway is metabolic intermediate biosynthesis; chorismate biosynthesis; chorismate from D-erythrose 4-phosphate and phosphoenolpyruvate: step 7/7. Catalyzes the anti-1,4-elimination of the C-3 phosphate and the C-6 proR hydrogen from 5-enolpyruvylshikimate-3-phosphate (EPSP) to yield chorismate, which is the branch point compound that serves as the starting substrate for the three terminal pathways of aromatic amino acid biosynthesis. This reaction introduces a second double bond into the aromatic ring system. The protein is Chorismate synthase of Legionella pneumophila (strain Lens).